The following is a 281-amino-acid chain: Auxin-responsive protein IAA19 (281 aa).

Positions 40 to 44 (LRLGL) match the EAR-like (transcriptional repression) motif. Residues 66 to 126 (LGPAPPPRGG…AAGAPRAAKA (61 aa)) are disordered. The segment covering 79 to 91 (GFVDSLDRSEGRR) has biased composition (basic and acidic residues). The span at 114-126 (GEAAAGAPRAAKA) shows a compositional bias: low complexity. One can recognise a PB1 domain in the interval 161-265 (CCYVKVSMDG…RKLRIMRGSD (105 aa)).

This sequence belongs to the Aux/IAA family. As to quaternary structure, homodimers and heterodimers. Expressed in etiolated seedlings and flowers.

The protein resides in the nucleus. Its function is as follows. Aux/IAA proteins are short-lived transcriptional factors that function as repressors of early auxin response genes at low auxin concentrations. The polypeptide is Auxin-responsive protein IAA19 (IAA19) (Oryza sativa subsp. japonica (Rice)).